The primary structure comprises 117 residues: Small ribosomal subunit protein bS6 (117 aa).

Positions 96–117 (HAEGPSVQMQKRDERDNRRERR) are disordered. Residues 105–117 (QKRDERDNRRERR) show a composition bias toward basic and acidic residues.

It belongs to the bacterial ribosomal protein bS6 family.

In terms of biological role, binds together with bS18 to 16S ribosomal RNA. The sequence is that of Small ribosomal subunit protein bS6 from Ruegeria sp. (strain TM1040) (Silicibacter sp.).